Here is a 105-residue protein sequence, read N- to C-terminus: ATP synthase subunit c (105 aa).

3 consecutive transmembrane segments (helical) span residues 3 to 23 (FLALFFLALVGVAFAYDGGMD), 32 to 52 (SILGAMIGLGIAAFGGAIGMG), and 78 to 98 (VAMAMIEAQVIYTLVFAIIAI).

It belongs to the ATPase C chain family. F-type ATPases have 2 components, F(1) - the catalytic core - and F(0) - the membrane proton channel. F(1) has five subunits: alpha(3), beta(3), gamma(1), delta(1), epsilon(1). F(0) has three main subunits: a(1), b(2) and c(10-14). The alpha and beta chains form an alternating ring which encloses part of the gamma chain. F(1) is attached to F(0) by a central stalk formed by the gamma and epsilon chains, while a peripheral stalk is formed by the delta and b chains.

Its subcellular location is the cell inner membrane. Functionally, f(1)F(0) ATP synthase produces ATP from ADP in the presence of a proton or sodium gradient. F-type ATPases consist of two structural domains, F(1) containing the extramembraneous catalytic core and F(0) containing the membrane proton channel, linked together by a central stalk and a peripheral stalk. During catalysis, ATP synthesis in the catalytic domain of F(1) is coupled via a rotary mechanism of the central stalk subunits to proton translocation. Its function is as follows. Key component of the F(0) channel; it plays a direct role in translocation across the membrane. A homomeric c-ring of between 10-14 subunits forms the central stalk rotor element with the F(1) delta and epsilon subunits. The chain is ATP synthase subunit c from Helicobacter acinonychis (strain Sheeba).